A 546-amino-acid polypeptide reads, in one-letter code: G1/S-specific cyclin CLN1 (546 aa).

Residues 224 to 265 (SNGKEWSCKRKSQSSDDSDATVEEHISSSPQSTGLDGDTTTM) form a disordered region.

It belongs to the cyclin family.

Functionally, essential for the control of the cell cycle at the G1/S (start) transition. Interacts with the CDC28 protein kinase to form MPF. This is G1/S-specific cyclin CLN1 (CLN1) from Saccharomyces cerevisiae (strain ATCC 204508 / S288c) (Baker's yeast).